The following is a 68-amino-acid chain: Potassium channel toxin epsilon-KTx 1.2 (68 aa).

The signal sequence occupies residues 1-26 (MKFSCGFLLIFLVLSAMIATFSEVEA). 4 disulfide bridges follow: Cys30/Cys38, Cys33/Cys54, Cys37/Cys47, and Cys42/Cys52. Tyr55 carries the tyrosine amide modification. Residues 57-68 (RSDLNEEFENYQ) constitute a propeptide that is removed on maturation.

The protein belongs to the short scorpion toxin superfamily. Potassium channel inhibitor family. Epsilon-KTx 01 subfamily. Expressed by the venom gland.

It localises to the secreted. Functionally, potassium channel blocker. At 3 uM, this toxin blocks voltage-gated potassium channels rKv1.2/KCNA2 (5%), hKv1.3/KCNA3 (10%),rKv1.4/KCNA4 (20%), Kv11/hERG (24%), and Shaker-IR (27%). The sequence is that of Potassium channel toxin epsilon-KTx 1.2 from Tityus serrulatus (Brazilian scorpion).